Here is a 432-residue protein sequence, read N- to C-terminus: Adenylosuccinate lyase (432 aa).

Residues 4–5 (RY), 67–69 (RHD), and 93–94 (TS) contribute to the N(6)-(1,2-dicarboxyethyl)-AMP site. The active-site Proton donor/acceptor is the H141. Q212 is a binding site for N(6)-(1,2-dicarboxyethyl)-AMP. The active-site Proton donor/acceptor is the S262. N(6)-(1,2-dicarboxyethyl)-AMP is bound by residues S263, 268-270 (KRN), N276, and 307-311 (SAERI).

This sequence belongs to the lyase 1 family. Adenylosuccinate lyase subfamily. In terms of assembly, homodimer and homotetramer. Residues from neighboring subunits contribute catalytic and substrate-binding residues to each active site.

It catalyses the reaction N(6)-(1,2-dicarboxyethyl)-AMP = fumarate + AMP. It carries out the reaction (2S)-2-[5-amino-1-(5-phospho-beta-D-ribosyl)imidazole-4-carboxamido]succinate = 5-amino-1-(5-phospho-beta-D-ribosyl)imidazole-4-carboxamide + fumarate. Its pathway is purine metabolism; AMP biosynthesis via de novo pathway; AMP from IMP: step 2/2. It functions in the pathway purine metabolism; IMP biosynthesis via de novo pathway; 5-amino-1-(5-phospho-D-ribosyl)imidazole-4-carboxamide from 5-amino-1-(5-phospho-D-ribosyl)imidazole-4-carboxylate: step 2/2. Catalyzes two reactions in de novo purine nucleotide biosynthesis. Catalyzes the breakdown of 5-aminoimidazole- (N-succinylocarboxamide) ribotide (SAICAR or 2-[5-amino-1-(5-phospho-beta-D-ribosyl)imidazole-4-carboxamido]succinate) to 5-aminoimidazole-4-carboxamide ribotide (AICAR or 5-amino-1-(5-phospho-beta-D-ribosyl)imidazole-4-carboxamide) and fumarate, and of adenylosuccinate (ADS or N(6)-(1,2-dicarboxyethyl)-AMP) to adenosine monophosphate (AMP) and fumarate. The protein is Adenylosuccinate lyase (purB) of Streptococcus mutans serotype c (strain ATCC 700610 / UA159).